The following is a 427-amino-acid chain: Glutamate-1-semialdehyde 2,1-aminomutase (427 aa).

Residue lysine 265 is modified to N6-(pyridoxal phosphate)lysine.

Belongs to the class-III pyridoxal-phosphate-dependent aminotransferase family. HemL subfamily. Homodimer. Requires pyridoxal 5'-phosphate as cofactor.

It localises to the cytoplasm. It carries out the reaction (S)-4-amino-5-oxopentanoate = 5-aminolevulinate. The protein operates within porphyrin-containing compound metabolism; protoporphyrin-IX biosynthesis; 5-aminolevulinate from L-glutamyl-tRNA(Glu): step 2/2. This is Glutamate-1-semialdehyde 2,1-aminomutase from Neisseria meningitidis serogroup C (strain 053442).